The primary structure comprises 33 residues: Pardaxin P-3 (33 aa).

The protein belongs to the pardaxin family. In aqueous solution exists as a tetramer.

The protein localises to the secreted. It is found in the target cell membrane. Exhibits unusual shark repellent and surfactant properties. Forms voltage-dependent, ion-permeable channels in membranes. At high concentration causes cell membrane lysis. In Pardachirus pavoninus (Peacock sole), this protein is Pardaxin P-3.